A 149-amino-acid chain; its full sequence is Nucleoside diphosphate kinase (149 aa).

ATP-binding residues include Lys-11, Phe-59, Arg-87, Thr-93, Arg-104, and Asn-114. The active-site Pros-phosphohistidine intermediate is the His-117.

Belongs to the NDK family. As to quaternary structure, homotetramer. Mg(2+) is required as a cofactor.

The protein localises to the cytoplasm. The catalysed reaction is a 2'-deoxyribonucleoside 5'-diphosphate + ATP = a 2'-deoxyribonucleoside 5'-triphosphate + ADP. It catalyses the reaction a ribonucleoside 5'-diphosphate + ATP = a ribonucleoside 5'-triphosphate + ADP. In terms of biological role, major role in the synthesis of nucleoside triphosphates other than ATP. The ATP gamma phosphate is transferred to the NDP beta phosphate via a ping-pong mechanism, using a phosphorylated active-site intermediate. The protein is Nucleoside diphosphate kinase of Treponema pallidum (strain Nichols).